The chain runs to 436 residues: GTPase Der (436 aa).

EngA-type G domains lie at 4–167 (PTVA…PVEE) and 175–351 (IRFS…ESQN). Residues 10-17 (GRPNVGKS), 57-61 (DTGGI), 119-122 (NKVD), 181-188 (GRPNVGKS), 229-233 (DTAGM), and 294-297 (NKWD) contribute to the GTP site. The KH-like domain maps to 352-436 (KRIPSAVLND…PIHLIARKRK (85 aa)).

The protein belongs to the TRAFAC class TrmE-Era-EngA-EngB-Septin-like GTPase superfamily. EngA (Der) GTPase family. As to quaternary structure, associates with the 50S ribosomal subunit.

Functionally, GTPase that plays an essential role in the late steps of ribosome biogenesis. This Streptococcus pyogenes serotype M5 (strain Manfredo) protein is GTPase Der.